A 110-amino-acid polypeptide reads, in one-letter code: Minor capsid protein VP2 (110 aa).

This sequence belongs to the vesivirus VP2 protein family. Homooligomer. The portal-like structure consists in 12 copies of VP2. Interacts with capsid protein VP1.

Its subcellular location is the virion. It localises to the host cytoplasm. In terms of biological role, minor structural protein that forms a portal-like structure at a unique three-fold axis of symmetry, following binding to the host receptor. The channel formed by VP2 may allow the delivery of the viral genome through the host endosomal membrane. The chain is Minor capsid protein VP2 from Vesicular exanthema of swine virus serotype A48 (isolate Swine/United States/A48/1948) (VESV).